The following is a 258-amino-acid chain: MLAKRIIPCLDVRDGQVVKGVQFRNHEIIGDIVPLAKRYAEEGADELVFYDITASSDGRVVDKSWVARVAEVIDIPFCVAGGIKSAEDAAKILSFGADKISINSPALADPELITRLADRFGVQCIVVGIDTWFDDATGKYHVNQYTGDESRTRVTQWETLDWVQEVQKRGAGEIVLNMMNQDGVRNGYDLEQLKKVRAVCRVPMIASGGAGTMEHFLEAFRDADVDGALAASVFHKQIINIGELKTYLATQGVEIRLC.

Residues Asp-11 and Asp-130 contribute to the active site.

It belongs to the HisA/HisF family. In terms of assembly, heterodimer of HisH and HisF.

The protein resides in the cytoplasm. The enzyme catalyses 5-[(5-phospho-1-deoxy-D-ribulos-1-ylimino)methylamino]-1-(5-phospho-beta-D-ribosyl)imidazole-4-carboxamide + L-glutamine = D-erythro-1-(imidazol-4-yl)glycerol 3-phosphate + 5-amino-1-(5-phospho-beta-D-ribosyl)imidazole-4-carboxamide + L-glutamate + H(+). It participates in amino-acid biosynthesis; L-histidine biosynthesis; L-histidine from 5-phospho-alpha-D-ribose 1-diphosphate: step 5/9. Its function is as follows. IGPS catalyzes the conversion of PRFAR and glutamine to IGP, AICAR and glutamate. The HisF subunit catalyzes the cyclization activity that produces IGP and AICAR from PRFAR using the ammonia provided by the HisH subunit. In Enterobacter sp. (strain 638), this protein is Imidazole glycerol phosphate synthase subunit HisF.